Here is a 337-residue protein sequence, read N- to C-terminus: UDP-3-O-acylglucosamine N-acyltransferase 2 (337 aa).

Histidine 238 (proton acceptor) is an active-site residue.

This sequence belongs to the transferase hexapeptide repeat family. LpxD subfamily. As to quaternary structure, homotrimer.

It catalyses the reaction a UDP-3-O-[(3R)-3-hydroxyacyl]-alpha-D-glucosamine + a (3R)-hydroxyacyl-[ACP] = a UDP-2-N,3-O-bis[(3R)-3-hydroxyacyl]-alpha-D-glucosamine + holo-[ACP] + H(+). Its pathway is bacterial outer membrane biogenesis; LPS lipid A biosynthesis. Functionally, catalyzes the N-acylation of UDP-3-O-acylglucosamine using 3-hydroxyacyl-ACP as the acyl donor. Is involved in the biosynthesis of lipid A, a phosphorylated glycolipid that anchors the lipopolysaccharide to the outer membrane of the cell. This Francisella tularensis subsp. tularensis (strain FSC 198) protein is UDP-3-O-acylglucosamine N-acyltransferase 2.